A 288-amino-acid polypeptide reads, in one-letter code: 2-hydroxy-6-oxononadienedioate/2-hydroxy-6-oxononatrienedioate hydrolase (288 aa).

One can recognise an AB hydrolase-1 domain in the interval 39-274; that stretch reads LVLLHGSGPG…RCGHWAQWEH (236 aa). The active-site Proton acceptor is the His-268.

This sequence belongs to the AB hydrolase superfamily. MhpC family. Homodimer.

The catalysed reaction is (2Z,4E)-2-hydroxy-6-oxonona-2,4-dienedioate + H2O = (2Z)-2-hydroxypenta-2,4-dienoate + succinate + H(+). It catalyses the reaction (2Z,4E,7E)-2-hydroxy-6-oxonona-2,4,7-trienedioate + H2O = (2Z)-2-hydroxypenta-2,4-dienoate + fumarate + H(+). Its pathway is aromatic compound metabolism; 3-phenylpropanoate degradation. Its function is as follows. Catalyzes the cleavage of the C5-C6 bond of 2-hydroxy-6-oxononadienedioate and 2-hydroxy-6-oxononatrienedioate, a dienol ring fission product of the bacterial meta-cleavage pathway for degradation of phenylpropionic acid. The chain is 2-hydroxy-6-oxononadienedioate/2-hydroxy-6-oxononatrienedioate hydrolase from Paraburkholderia phymatum (strain DSM 17167 / CIP 108236 / LMG 21445 / STM815) (Burkholderia phymatum).